We begin with the raw amino-acid sequence, 314 residues long: Homoserine O-acetyltransferase (314 aa).

Cysteine 142 acts as the Acyl-thioester intermediate in catalysis. Positions 163 and 192 each coordinate substrate. The Proton acceptor role is filled by histidine 235. The active site involves glutamate 237. Arginine 249 is a binding site for substrate.

Belongs to the MetA family.

The protein localises to the cytoplasm. The catalysed reaction is L-homoserine + acetyl-CoA = O-acetyl-L-homoserine + CoA. Its pathway is amino-acid biosynthesis; L-methionine biosynthesis via de novo pathway; O-acetyl-L-homoserine from L-homoserine: step 1/1. Transfers an acetyl group from acetyl-CoA to L-homoserine, forming acetyl-L-homoserine. This is Homoserine O-acetyltransferase from Desulfovibrio desulfuricans (strain ATCC 27774 / DSM 6949 / MB).